A 121-amino-acid chain; its full sequence is Large ribosomal subunit protein bL12 (121 aa).

This sequence belongs to the bacterial ribosomal protein bL12 family. Homodimer. Part of the ribosomal stalk of the 50S ribosomal subunit. Forms a multimeric L10(L12)X complex, where L10 forms an elongated spine to which 2 to 4 L12 dimers bind in a sequential fashion. Binds GTP-bound translation factors.

Functionally, forms part of the ribosomal stalk which helps the ribosome interact with GTP-bound translation factors. Is thus essential for accurate translation. The sequence is that of Large ribosomal subunit protein bL12 from Pectobacterium carotovorum subsp. carotovorum (strain PC1).